A 105-amino-acid polypeptide reads, in one-letter code: Large ribosomal subunit protein eL36 (105 aa).

It belongs to the eukaryotic ribosomal protein eL36 family. Component of the large ribosomal subunit.

The protein resides in the cytoplasm. It localises to the cytosol. In terms of biological role, component of the large ribosomal subunit. The ribosome is a large ribonucleoprotein complex responsible for the synthesis of proteins in the cell. The chain is Large ribosomal subunit protein eL36 (rpl36) from Xenopus laevis (African clawed frog).